The following is a 412-amino-acid chain: Multifunctional CCA protein (412 aa).

Residues glycine 8 and arginine 11 each coordinate ATP. Residues glycine 8 and arginine 11 each coordinate CTP. Mg(2+)-binding residues include glutamate 21 and aspartate 23. Residues arginine 91, arginine 137, and arginine 140 each coordinate ATP. Residues arginine 91, arginine 137, and arginine 140 each coordinate CTP. The 102-residue stretch at 228–329 (CGIHTLMSLQ…WRLLQRLDVL (102 aa)) folds into the HD domain.

Belongs to the tRNA nucleotidyltransferase/poly(A) polymerase family. Bacterial CCA-adding enzyme type 1 subfamily. In terms of assembly, monomer. Can also form homodimers and oligomers. Mg(2+) is required as a cofactor. The cofactor is Ni(2+).

It catalyses the reaction a tRNA precursor + 2 CTP + ATP = a tRNA with a 3' CCA end + 3 diphosphate. The enzyme catalyses a tRNA with a 3' CCA end + 2 CTP + ATP = a tRNA with a 3' CCACCA end + 3 diphosphate. Its function is as follows. Catalyzes the addition and repair of the essential 3'-terminal CCA sequence in tRNAs without using a nucleic acid template. Adds these three nucleotides in the order of C, C, and A to the tRNA nucleotide-73, using CTP and ATP as substrates and producing inorganic pyrophosphate. tRNA 3'-terminal CCA addition is required both for tRNA processing and repair. Also involved in tRNA surveillance by mediating tandem CCA addition to generate a CCACCA at the 3' terminus of unstable tRNAs. While stable tRNAs receive only 3'-terminal CCA, unstable tRNAs are marked with CCACCA and rapidly degraded. The protein is Multifunctional CCA protein of Acinetobacter baumannii (strain ATCC 17978 / DSM 105126 / CIP 53.77 / LMG 1025 / NCDC KC755 / 5377).